A 248-amino-acid polypeptide reads, in one-letter code: Probable transcriptional regulatory protein Atu3727 (248 aa).

Residues 1-21 (MAGHSQFKNIMHRKGKQDSVR) are disordered.

This sequence belongs to the TACO1 family.

It is found in the cytoplasm. This is Probable transcriptional regulatory protein Atu3727 from Agrobacterium fabrum (strain C58 / ATCC 33970) (Agrobacterium tumefaciens (strain C58)).